Here is a 38-residue protein sequence, read N- to C-terminus: MKIYSSIKKRCEHCRIIKRKGKRFVICKVNPSHKQRQG.

This sequence belongs to the bacterial ribosomal protein bL36 family.

This is Large ribosomal subunit protein bL36 from Chlorobium limicola (strain DSM 245 / NBRC 103803 / 6330).